A 468-amino-acid polypeptide reads, in one-letter code: Protein C-ets-2 (468 aa).

The PNT domain maps to 85 to 170; it reads ATFSGFQKEQ…EHLEQMIKEN (86 aa). Phosphoserine is present on residues serine 220 and serine 225. Positions 262–290 are disordered; the sequence is VNLLNNNSGKPKDHDSPENGGDSFESSDS. Phosphoserine is present on residues serine 294, serine 297, and serine 300. Residues 362-442 constitute a DNA-binding region (ETS); that stretch reads IQLWQFLLEL…SGKRYVYRFV (81 aa).

It belongs to the ETS family. In terms of processing, phosphorylation by CDK10 at Ser-220 and Ser-225 creates a phosphodegron that targets ETS2 for proteasomal degradation.

The protein resides in the nucleus. Its function is as follows. Transcription factor activating transcription. Binds specifically the GGA DNA motif in gene promoters and stimulates transcription of those genes. The sequence is that of Protein C-ets-2 (Ets2) from Mus musculus (Mouse).